Here is a 442-residue protein sequence, read N- to C-terminus: 5'-deoxyadenosine deaminase (442 aa).

Zn(2+) is bound by residues His72 and His74. The substrate site is built by Glu101 and His193. His220 serves as a coordination point for Zn(2+). Residues Glu223 and Asp309 each coordinate substrate. Zn(2+) is bound at residue Asp309.

Belongs to the metallo-dependent hydrolases superfamily. MTA/SAH deaminase family. Homotetramer. Requires Zn(2+) as cofactor.

It catalyses the reaction 5'-deoxyadenosine + H2O + H(+) = 5'-deoxyinosine + NH4(+). The catalysed reaction is S-adenosyl-L-homocysteine + H2O + H(+) = S-inosyl-L-homocysteine + NH4(+). The enzyme catalyses S-methyl-5'-thioadenosine + H2O + H(+) = S-methyl-5'-thioinosine + NH4(+). It carries out the reaction adenosine + H2O + H(+) = inosine + NH4(+). It participates in amino-acid biosynthesis; S-adenosyl-L-methionine biosynthesis. Its function is as follows. Catalyzes the deamination of three SAM-derived enzymatic products, namely 5'-deoxyadenosine, S-adenosyl-L-homocysteine, and 5'-methylthioadenosine, to produce the inosine analogs. Can also deaminate adenosine. The preferred substrate for this enzyme is 5'-deoxyadenosine, but all these substrates are efficiently deaminated. Likely functions in a S-adenosyl-L-methionine (SAM) recycling pathway from S-adenosyl-L-homocysteine (SAH) produced from SAM-dependent methylation reactions. May also be involved in the recycling of 5'-deoxyadenosine, whereupon the 5'-deoxyribose moiety of 5'-deoxyinosine is further metabolized to deoxyhexoses used for the biosynthesis of aromatic amino acids in methanogens. The sequence is that of 5'-deoxyadenosine deaminase from Methanoregula boonei (strain DSM 21154 / JCM 14090 / 6A8).